Reading from the N-terminus, the 361-residue chain is MNIDEKIKLITRNTDEVITIDELKKKLEENSKLKGYIGFEPSGLFHIGWLIWAQKLKDLIKAGVDMSILVATWHAMINDKLGGDLEKIKLAGKYALEVLEGFGVDMSKLKVVYAEDLVENIDYWSLVVKVAKNTSLARMKRALTIMGRRSEEAELDTSKLIYPAMQVSDIFFQDLDIALGGTDQRKAHMLARDVAEKLQRKKVIAIHTPLLVGLQGGQRMNTEGLEEDDYLATIKMSKSKPETAIFIHDSPELVESKLKNSYCPKGVVNDNPVLQINKYIIFGEQGVTLKIERDTKYGGDIEIKSYEELERIFIEGKLHPLDLKLATARKLNDILDPIRKRISSKSQFVDLISSIEKSITR.

5 residues coordinate L-tyrosine: tyrosine 36, tyrosine 162, glutamine 166, aspartate 169, and glutamine 184. Residues 235 to 239 (KMSKS) carry the 'KMSKS' region motif. Residue lysine 238 coordinates ATP.

It belongs to the class-I aminoacyl-tRNA synthetase family. TyrS type 4 subfamily. In terms of assembly, homodimer.

Its subcellular location is the cytoplasm. It carries out the reaction tRNA(Tyr) + L-tyrosine + ATP = L-tyrosyl-tRNA(Tyr) + AMP + diphosphate + H(+). Its function is as follows. Catalyzes the attachment of tyrosine to tRNA(Tyr) in a two-step reaction: tyrosine is first activated by ATP to form Tyr-AMP and then transferred to the acceptor end of tRNA(Tyr). This Sulfolobus acidocaldarius (strain ATCC 33909 / DSM 639 / JCM 8929 / NBRC 15157 / NCIMB 11770) protein is Tyrosine--tRNA ligase.